Here is a 104-residue protein sequence, read N- to C-terminus: Transcription factor ILI1 (104 aa).

The segment covering 1–11 (MSSSRRSRSRR) has biased composition (basic residues). A disordered region spans residues 1–27 (MSSSRRSRSRRAGSSVPSSSSSSRTSI). The segment covering 12–27 (AGSSVPSSSSSSRTSI) has biased composition (low complexity). One can recognise a bHLH domain in the interval 16 to 71 (VPSSSSSSRTSISEDQIAELLSKLQALLPESQARNGAHRGSAARVLQETCSYIRSL).

This sequence belongs to the bHLH protein family. Interacts with IBH1.

In terms of biological role, atypical and probable non DNA-binding bHLH transcription factor that acts as a positive regulator of cell elongation and plant development. Binds the transcription repressor IBH1 and forms a heterodimer of antagonistic bHLH transcription factors that function downstream of BZR1 to mediate brassinosteroid regulation of cell elongation and lamina inclination. The chain is Transcription factor ILI1 (ILI1) from Oryza sativa subsp. indica (Rice).